Here is a 188-residue protein sequence, read N- to C-terminus: Peptidyl-tRNA hydrolase (188 aa).

Residue F14 participates in tRNA binding. The active-site Proton acceptor is the H19. Y64, N66, and N112 together coordinate tRNA.

It belongs to the PTH family. In terms of assembly, monomer.

It localises to the cytoplasm. The catalysed reaction is an N-acyl-L-alpha-aminoacyl-tRNA + H2O = an N-acyl-L-amino acid + a tRNA + H(+). In terms of biological role, hydrolyzes ribosome-free peptidyl-tRNAs (with 1 or more amino acids incorporated), which drop off the ribosome during protein synthesis, or as a result of ribosome stalling. Catalyzes the release of premature peptidyl moieties from peptidyl-tRNA molecules trapped in stalled 50S ribosomal subunits, and thus maintains levels of free tRNAs and 50S ribosomes. The chain is Peptidyl-tRNA hydrolase from Onion yellows phytoplasma (strain OY-M).